The chain runs to 460 residues: MTVVGDVAPIPRRNSSTCSNDIAAPLLPECHGDEVAHDEFNGASFSGAVFNLATTIIGAGIMALPATMKILGLGLGITMIVVMAFLTDASIEFLLRFSKAGKNRSYGGLMGGSFGNPGRILLQVAVLVNNIGVLIVYMIIIGDVLAGKTEDGIHHFGVLEGWFGHHWWNGRAAILLITTLGVFAPLACFKRIDSLKFTSALSVALAVVFLIITAGISIMKLISGGVAMPRLLPDVTDLTSFWNLFTVVPVLVTAFICHYNVHSIQNELEDPSQIRPVVRSALMLCSSVYIMTSIFGFLLFGDDTLDDVLANFDTDLGIPFGSILNDAVRVSYALHLMLVFPIVFYPLRINIDGLLFPSARSLSTSNVRFGCLTAGLISVIFLGANFIPSIWDAFQFTGATAAVCLGFIFPASIILKDRHDKATNRDTTLAIFMIVLAVLSNAIAIYSDAYALFKKNAPRE.

The next 11 helical transmembrane spans lie at 45–65, 66–86, 120–140, 172–192, 199–219, 238–258, 281–301, 336–356, 371–391, 394–414, and 427–447; these read FSGA…MALP, ATMK…MAFL, ILLQ…YMII, AAIL…FKRI, SALS…ISIM, LTSF…FICH, ALML…LLFG, LMLV…GLLF, CLTA…PSIW, FQFT…ASII, and TTLA…AIYS.

This sequence belongs to the amino acid/polyamine transporter 2 family. Amino acid/auxin permease (AAAP) (TC 2.A.18.6) subfamily.

It is found in the membrane. This is Amino acid transporter AVT6A from Arabidopsis thaliana (Mouse-ear cress).